A 1219-amino-acid polypeptide reads, in one-letter code: Polyamine-transporting ATPase 13A3 (1219 aa).

Residues 1-28 are Cytoplasmic-facing; sequence MDKEERKTINKGQEDEMEIHGYNLCRWK. The stretch at 29–49 is an intramembrane region; the sequence is LAMVFVGVICTGGFLLLLLYW. Over 50 to 201 the chain is Cytoplasmic; it reads LPEWRVKATC…IAVKVPSVFK (152 aa). Residues 202–222 traverse the membrane as a helical segment; that stretch reads LLIKEVLNPFYIFQLFSVILW. Residues 223–228 are Lumenal-facing; that stretch reads SVDEYY. A helical membrane pass occupies residues 229–249; sequence YYALAIVIMSVVSIISSLYSI. At 250 to 405 the chain is on the cytoplasmic side; sequence RKQYVMLHDM…KPTDFKLYRD (156 aa). The helical transmembrane segment at 406 to 426 threads the bilayer; it reads AYLFLLCLVVVAGIGFIYTII. The Lumenal segment spans residues 427–444; the sequence is NSILNEKEVQEIIIKSLD. A helical transmembrane segment spans residues 445–465; the sequence is IITITVPPALPAAMTAGIVYA. Topologically, residues 466-936 are cytoplasmic; the sequence is QRRLKKVGIF…ALMTSFCVFK (471 aa). The active-site 4-aspartylphosphate intermediate is the aspartate 494. Aspartate 494 and threonine 496 together coordinate Mg(2+). ATP is bound by residues 494-496, phenylalanine 624, arginine 680, and aspartate 746; that span reads DKT. At serine 813 the chain carries Phosphoserine. Residues aspartate 879 and aspartate 883 each coordinate Mg(2+). 879-883 contributes to the ATP binding site; that stretch reads DGAND. Residues 937–957 form a helical membrane-spanning segment; it reads FMALYSIIQYFSVTLLYSILS. Residue asparagine 958 is a topological domain, lumenal. A helical transmembrane segment spans residues 959–979; that stretch reads LGDFQFLFIDLAIILVVVFTM. Topologically, residues 980-995 are cytoplasmic; it reads SLNPAWKELVAQRPPS. Residues 996–1016 form a helical membrane-spanning segment; sequence GLISGALLFSVLSQIVISVGF. Over 1017 to 1066 the chain is Lumenal; the sequence is QSLGFFWVKQYKVCDPNSDVCNTTRSACWNSSHLYNGTELDSCKIQNYEN. A helical membrane pass occupies residues 1067–1087; sequence TTVFFISSFQYLTVAVAFSKG. Over 1088-1098 the chain is Cytoplasmic; the sequence is KPFRQPCYKNY. The helical transmembrane segment at 1099-1119 threads the bilayer; sequence FFVISVIILYVFILFIMLHPV. Over 1120-1136 the chain is Lumenal; sequence ASVDQVLEIMCVPYQWR. The chain crosses the membrane as a helical span at residues 1137–1157; that stretch reads IYMLIIVLINAFVSITVEESV. Topologically, residues 1158–1219 are cytoplasmic; that stretch reads DRWGKCCLSW…NGSCQIITIA (62 aa).

Belongs to the cation transport ATPase (P-type) (TC 3.A.3) family. Type V subfamily. As to expression, expression is greatest in liver, followed by kidney, colon, stomach, brain and small intestine. Isoform 1 is highly expressed in the kidney while isoform 2 is highly expressed in the brain.

It localises to the recycling endosome membrane. Its subcellular location is the early endosome membrane. The protein resides in the late endosome membrane. The catalysed reaction is putrescine(out) + ATP + H2O = putrescine(in) + ADP + phosphate + H(+). ATP-driven pump involved in endocytosis-dependent polyamine transport. Uses ATP as an energy source to transfer polyamine precursor putrescine from the endosomal compartment to the cytosol. The protein is Polyamine-transporting ATPase 13A3 of Mus musculus (Mouse).